A 160-amino-acid chain; its full sequence is Large ribosomal subunit protein uL22c (160 aa).

This sequence belongs to the universal ribosomal protein uL22 family. Part of the 50S ribosomal subunit.

The protein resides in the plastid. The protein localises to the chloroplast. In terms of biological role, this protein binds specifically to 23S rRNA. Functionally, the globular domain of the protein is located near the polypeptide exit tunnel on the outside of the subunit, while an extended beta-hairpin is found that lines the wall of the exit tunnel in the center of the 70S ribosome. In Arabis hirsuta (Hairy rock-cress), this protein is Large ribosomal subunit protein uL22c (rpl22).